Here is a 141-residue protein sequence, read N- to C-terminus: Large ribosomal subunit protein uL11 (141 aa).

The protein belongs to the universal ribosomal protein uL11 family. In terms of assembly, part of the ribosomal stalk of the 50S ribosomal subunit. Interacts with L10 and the large rRNA to form the base of the stalk. L10 forms an elongated spine to which L12 dimers bind in a sequential fashion forming a multimeric L10(L12)X complex. Post-translationally, one or more lysine residues are methylated.

Its function is as follows. Forms part of the ribosomal stalk which helps the ribosome interact with GTP-bound translation factors. The protein is Large ribosomal subunit protein uL11 of Streptococcus equi subsp. equi (strain 4047).